Here is a 531-residue protein sequence, read N- to C-terminus: Outer dynein arm-docking complex subunit 4 (531 aa).

3 TPR repeats span residues 15–48 (FSTY…QPEE), 50–82 (NCLV…ENDF), and 83–116 (FKGL…RPEF). The tract at residues 161–185 (KQKAQVKVQKKDSKQQKKVDPERSQ) is disordered. Residues 169-185 (QKKDSKQQKKVDPERSQ) are compositionally biased toward basic and acidic residues. TPR repeat units follow at residues 275–307 (VKSL…VERW), 320–353 (GSLH…AEKY), 360–393 (SRAL…ANSS), 397–430 (TWLY…ADAA), and 437–470 (LNAC…ARLL). The interval 487–531 (KQGMEEQQESEQNNDENDNLRADGNTARDEEEEDVHVQRTEEDEG) is disordered. The span at 492–503 (EQQESEQNNDEN) shows a compositional bias: acidic residues. Residues 521 to 531 (VHVQRTEEDEG) are compositionally biased toward basic and acidic residues.

In terms of assembly, component of the outer dynein arm-docking complex. As to expression, in the mucociliary epithelium, specifically expressed in ciliated cells.

It localises to the cytoplasm. The protein localises to the cytoskeleton. It is found in the cilium axoneme. Component of the outer dynein arm-docking complex (ODA-DC) that mediates outer dynein arms (ODA) binding onto the doublet microtubule. Plays an essential role for the assembly of ODA-DC and in the docking of ODA in ciliary axoneme. Its function is as follows. Required for the docking of the outer dynein arm to cilia, hence plays an essential role in cilia motility. The sequence is that of Outer dynein arm-docking complex subunit 4 (odad4) from Xenopus laevis (African clawed frog).